The sequence spans 489 residues: Rhamnulokinase (489 aa).

ATP is bound at residue 13 to 17 (ASSGR). Residues Cys68 and Cys222 are joined by a disulfide bond. Substrate is bound by residues Gly83 and 236–238 (HDT). Asp237 functions as the Proton acceptor in the catalytic mechanism. Thr259 contributes to the ATP binding site. Substrate is bound at residue Asn296. Gln304 lines the ATP pocket. Residues Cys353 and Cys370 are joined by a disulfide bond. Gly402 provides a ligand contact to ATP. Cys413 and Cys417 are joined by a disulfide.

The protein belongs to the rhamnulokinase family. Mg(2+) is required as a cofactor.

It carries out the reaction L-rhamnulose + ATP = L-rhamnulose 1-phosphate + ADP + H(+). It functions in the pathway carbohydrate degradation; L-rhamnose degradation; glycerone phosphate from L-rhamnose: step 2/3. Its function is as follows. Involved in the catabolism of L-rhamnose (6-deoxy-L-mannose). Catalyzes the transfer of the gamma-phosphate group from ATP to the 1-hydroxyl group of L-rhamnulose to yield L-rhamnulose 1-phosphate. The protein is Rhamnulokinase of Salmonella typhi.